The primary structure comprises 811 residues: U-box domain-containing protein 43 (811 aa).

One can recognise a U-box domain in the interval 24-103; that stretch reads NIYEAFICPL…EEWRARNDAL (80 aa). 9 ARM repeats span residues 136-175, 178-217, 220-261, 263-302, 303-342, 344-388, 399-438, 444-484, and 489-528; these read RKIR…VVVE, EESK…ELSK, ALCE…NLER, EENV…VLAL, NNDV…NISS, EGSA…NIVN, GPHH…GLTS, INVV…NISP, and ELAN…LLAE.

The catalysed reaction is S-ubiquitinyl-[E2 ubiquitin-conjugating enzyme]-L-cysteine + [acceptor protein]-L-lysine = [E2 ubiquitin-conjugating enzyme]-L-cysteine + N(6)-ubiquitinyl-[acceptor protein]-L-lysine.. The protein operates within protein modification; protein ubiquitination. In terms of biological role, functions as an E3 ubiquitin ligase. In Arabidopsis thaliana (Mouse-ear cress), this protein is U-box domain-containing protein 43 (PUB43).